The primary structure comprises 148 residues: Large ribosomal subunit protein bL27m (148 aa).

A mitochondrion-targeting transit peptide spans 1 to 30; the sequence is MALAVLAWRTRTAVIALLSPPQAAALAVRY.

The protein belongs to the bacterial ribosomal protein bL27 family. In terms of assembly, component of the mitochondrial ribosome large subunit (39S) which comprises a 16S rRNA and about 50 distinct proteins.

It localises to the mitochondrion. The chain is Large ribosomal subunit protein bL27m (MRPL27) from Bos taurus (Bovine).